A 258-amino-acid chain; its full sequence is Shikimate dehydrogenase (NADP(+)) (258 aa).

Shikimate-binding positions include 14–16 (SES) and T61. K65 (proton acceptor) is an active-site residue. Residues N86 and D101 each contribute to the shikimate site. NADP(+) contacts are provided by residues 125–129 (GSGGS) and L211. Y213 provides a ligand contact to shikimate. Residue G234 participates in NADP(+) binding.

This sequence belongs to the shikimate dehydrogenase family. As to quaternary structure, homodimer.

It carries out the reaction shikimate + NADP(+) = 3-dehydroshikimate + NADPH + H(+). Its pathway is metabolic intermediate biosynthesis; chorismate biosynthesis; chorismate from D-erythrose 4-phosphate and phosphoenolpyruvate: step 4/7. Functionally, involved in the biosynthesis of the chorismate, which leads to the biosynthesis of aromatic amino acids. Catalyzes the reversible NADPH linked reduction of 3-dehydroshikimate (DHSA) to yield shikimate (SA). This is Shikimate dehydrogenase (NADP(+)) from Clostridium botulinum (strain 657 / Type Ba4).